We begin with the raw amino-acid sequence, 158 residues long: NADH-quinone oxidoreductase subunit B (158 aa).

Residues Cys-37, Cys-38, Cys-102, and Cys-132 each contribute to the [4Fe-4S] cluster site.

The protein belongs to the complex I 20 kDa subunit family. NDH-1 is composed of 14 different subunits. Subunits NuoB, C, D, E, F, and G constitute the peripheral sector of the complex. It depends on [4Fe-4S] cluster as a cofactor.

The protein localises to the cell inner membrane. The catalysed reaction is a quinone + NADH + 5 H(+)(in) = a quinol + NAD(+) + 4 H(+)(out). NDH-1 shuttles electrons from NADH, via FMN and iron-sulfur (Fe-S) centers, to quinones in the respiratory chain. Couples the redox reaction to proton translocation (for every two electrons transferred, four hydrogen ions are translocated across the cytoplasmic membrane), and thus conserves the redox energy in a proton gradient. The sequence is that of NADH-quinone oxidoreductase subunit B from Legionella pneumophila (strain Corby).